The primary structure comprises 495 residues: 4-aminobutyrate aminotransferase (495 aa).

160-161 lines the pyridoxal 5'-phosphate pocket; it reads GS. Residue Arg216 coordinates substrate. An N6-(pyridoxal phosphate)lysine modification is found at Lys350. Pyridoxal 5'-phosphate is bound at residue Thr374.

This sequence belongs to the class-III pyridoxal-phosphate-dependent aminotransferase family. In terms of assembly, homodimer. It depends on pyridoxal 5'-phosphate as a cofactor.

The enzyme catalyses 4-aminobutanoate + 2-oxoglutarate = succinate semialdehyde + L-glutamate. The protein is 4-aminobutyrate aminotransferase (gabT) of Dictyostelium discoideum (Social amoeba).